We begin with the raw amino-acid sequence, 43 residues long: Cytochrome b559 subunit beta (43 aa).

A helical membrane pass occupies residues 18–34 (WLAIHGLAIPTVFFLGG). Histidine 22 provides a ligand contact to heme.

It belongs to the PsbE/PsbF family. As to quaternary structure, heterodimer of an alpha subunit and a beta subunit. PSII is composed of 1 copy each of membrane proteins PsbA, PsbB, PsbC, PsbD, PsbE, PsbF, PsbH, PsbI, PsbJ, PsbK, PsbL, PsbM, PsbT, PsbX, PsbY, PsbZ, Psb30/Ycf12, at least 3 peripheral proteins of the oxygen-evolving complex and a large number of cofactors. It forms dimeric complexes. The cofactor is heme b.

It localises to the plastid. Its subcellular location is the chloroplast thylakoid membrane. Its function is as follows. This b-type cytochrome is tightly associated with the reaction center of photosystem II (PSII). PSII is a light-driven water:plastoquinone oxidoreductase that uses light energy to abstract electrons from H(2)O, generating O(2) and a proton gradient subsequently used for ATP formation. It consists of a core antenna complex that captures photons, and an electron transfer chain that converts photonic excitation into a charge separation. This Trieres chinensis (Marine centric diatom) protein is Cytochrome b559 subunit beta.